A 274-amino-acid chain; its full sequence is Sulfur carrier protein FdhD (274 aa).

The Cysteine persulfide intermediate role is filled by Cys120.

The protein belongs to the FdhD family.

Its subcellular location is the cytoplasm. In terms of biological role, required for formate dehydrogenase (FDH) activity. Acts as a sulfur carrier protein that transfers sulfur from IscS to the molybdenum cofactor prior to its insertion into FDH. This chain is Sulfur carrier protein FdhD, found in Burkholderia mallei (strain ATCC 23344).